A 1463-amino-acid polypeptide reads, in one-letter code: Clustered mitochondria protein homolog (1463 aa).

Residues 1–79 form a disordered region; it reads MAKNKKQNGK…ETEQQQQQQE (79 aa). Residues 10 to 22 show a composition bias toward low complexity; sequence KAKTPPVVAAAAG. A Clu domain is found at 374–616; it reads RAEDTFSSKL…RTFPPDVNFL (243 aa). Disordered stretches follow at residues 684-753, 942-988, and 1387-1463; these read AQKT…SEDA, GDGQ…SVPS, and QKEA…RRKS. Positions 692–702 are enriched in low complexity; it reads KQAAIEAAAPA. Basic and acidic residues predominate over residues 703 to 731; the sequence is EGDKTPAKDAKDGKEAGKDANDGKEEGST. Over residues 955–964 the composition is skewed to basic residues; sequence GGKKQNKQSK. Residues 965-980 are compositionally biased toward gly residues; it reads RGGGGGGGKGAAGGGR. The span at 1438 to 1456 shows a compositional bias: low complexity; that stretch reads AEAASHTAGGAAANTAAPA.

It belongs to the CLU family.

The protein localises to the cytoplasm. In terms of biological role, mRNA-binding protein involved in proper cytoplasmic distribution of mitochondria. The sequence is that of Clustered mitochondria protein homolog from Anopheles gambiae (African malaria mosquito).